A 422-amino-acid chain; its full sequence is Gamma-glutamyl phosphate reductase (422 aa).

The protein belongs to the gamma-glutamyl phosphate reductase family.

It localises to the cytoplasm. The catalysed reaction is L-glutamate 5-semialdehyde + phosphate + NADP(+) = L-glutamyl 5-phosphate + NADPH + H(+). The protein operates within amino-acid biosynthesis; L-proline biosynthesis; L-glutamate 5-semialdehyde from L-glutamate: step 2/2. Catalyzes the NADPH-dependent reduction of L-glutamate 5-phosphate into L-glutamate 5-semialdehyde and phosphate. The product spontaneously undergoes cyclization to form 1-pyrroline-5-carboxylate. In Chloroflexus aggregans (strain MD-66 / DSM 9485), this protein is Gamma-glutamyl phosphate reductase.